We begin with the raw amino-acid sequence, 250 residues long: uncharacterized protein (250 aa).

The segment covering 207–226 (LNDRDAINKSEEARKAREEV) has biased composition (basic and acidic residues). The segment at 207–250 (LNDRDAINKSEEARKAREEVFIPSEPSKPSIASKRSSASKSTKS) is disordered. Over residues 233-250 (SKPSIASKRSSASKSTKS) the composition is skewed to low complexity.

Its subcellular location is the plastid. The protein localises to the chloroplast. This is an uncharacterized protein from Chlorella vulgaris (Green alga).